We begin with the raw amino-acid sequence, 269 residues long: Hydroxyethylthiazole kinase (269 aa).

Residue Met42 participates in substrate binding. ATP is bound by residues Arg118 and Ser164. Substrate is bound at residue Gly191.

It belongs to the Thz kinase family. It depends on Mg(2+) as a cofactor.

It carries out the reaction 5-(2-hydroxyethyl)-4-methylthiazole + ATP = 4-methyl-5-(2-phosphooxyethyl)-thiazole + ADP + H(+). The protein operates within cofactor biosynthesis; thiamine diphosphate biosynthesis; 4-methyl-5-(2-phosphoethyl)-thiazole from 5-(2-hydroxyethyl)-4-methylthiazole: step 1/1. In terms of biological role, catalyzes the phosphorylation of the hydroxyl group of 4-methyl-5-beta-hydroxyethylthiazole (THZ). In Listeria monocytogenes serovar 1/2a (strain ATCC BAA-679 / EGD-e), this protein is Hydroxyethylthiazole kinase.